A 100-amino-acid polypeptide reads, in one-letter code: Replication restart protein PriB (100 aa).

The 96-residue stretch at 4 to 99 folds into the SSB domain; it reads TNLVSLAALI…LRIQNIKEYK (96 aa).

Belongs to the PriB family. In terms of assembly, homodimer. Component of the replication restart primosome. Primosome assembly occurs via a 'hand-off' mechanism. PriA binds to replication forks, subsequently PriB then DnaT bind; DnaT then displaces ssDNA to generate the helicase loading substrate. Interacts with PriA with high affinity, independent of DNA presence.

With respect to regulation, priA:PriB complex-catalyzed duplex DNA winding is inhibited by CGS 15943 (CHEBI:131351); PriA is the drug target. Its function is as follows. Stimulates the DNA unwinding activity of PriA helicase, which does not seem to require single-stranded (ss)DNA-binding by PriB. Activates DNA-dependent ATP hydrolysis catalyzed by PriA. Weakly binds ssDNA. Weakly binds double-stranded (ds)DNA, a partial duplex DNA with a 3' ssDNA overhang, and a forked DNA structure with fully duplex leading and lagging strand arms in vitro. Involved in the restart of stalled replication forks, which reloads the replicative helicase on sites other than the origin of replication; the PriA-PriB pathway is the major replication restart pathway. During primosome assembly it facilitates complex formation between PriA and DnaT on DNA; stabilizes PriA on DNA. Stimulates the DNA unwinding activity of PriA helicase. The sequence is that of Replication restart protein PriB from Neisseria gonorrhoeae (strain ATCC 700825 / FA 1090).